The sequence spans 183 residues: Adenylate kinase (183 aa).

12 to 17 lines the ATP pocket; that stretch reads GAGKGT. Positions 32 to 61 are NMP; the sequence is STGDLLRSEVSAGSALGQEAEAVMNRGELV. AMP contacts are provided by residues T33, R38, 59–61, 86–89, and Q93; these read ELV and GFPR. Positions 127–133 are LID; the sequence is ARGRADD. R128 is an ATP binding site. AMP is bound by residues R130 and R141. Position 169 (G169) interacts with ATP.

The protein belongs to the adenylate kinase family. In terms of assembly, monomer.

It localises to the cytoplasm. It carries out the reaction AMP + ATP = 2 ADP. It participates in purine metabolism; AMP biosynthesis via salvage pathway; AMP from ADP: step 1/1. In terms of biological role, catalyzes the reversible transfer of the terminal phosphate group between ATP and AMP. Plays an important role in cellular energy homeostasis and in adenine nucleotide metabolism. The sequence is that of Adenylate kinase from Synechococcus sp. (strain WH7803).